The chain runs to 177 residues: MNPRRKSRLKVVMAVLSGLAVAVGLTLYALSQNIDLFYTPSEIIYGKNNDPETKPEVGQRIRVGGMVVDGSVKRDDKTLKVTFDLNDIGPAIQVEYEGILPDLFREGQGIVAQGTLVEPTKLKATEVLAKHDENYMPPELGDQMKKQHQPMGISEADLKGKSERDATQISQPFGENK.

Residues 1-8 (MNPRRKSR) lie on the Cytoplasmic side of the membrane. The helical; Signal-anchor for type II membrane protein transmembrane segment at 9 to 29 (LKVVMAVLSGLAVAVGLTLYA) threads the bilayer. At 30–177 (LSQNIDLFYT…QISQPFGENK (148 aa)) the chain is on the periplasmic side. Heme-binding residues include His131 and Tyr135. The segment at 134–177 (NYMPPELGDQMKKQHQPMGISEADLKGKSERDATQISQPFGENK) is disordered. The segment covering 156–166 (ADLKGKSERDA) has biased composition (basic and acidic residues). The span at 167–177 (TQISQPFGENK) shows a compositional bias: polar residues.

Belongs to the CcmE/CycJ family.

The protein resides in the cell inner membrane. Functionally, heme chaperone required for the biogenesis of c-type cytochromes. Transiently binds heme delivered by CcmC and transfers the heme to apo-cytochromes in a process facilitated by CcmF and CcmH. This chain is Cytochrome c-type biogenesis protein CcmE, found in Glaesserella parasuis serovar 5 (strain SH0165) (Haemophilus parasuis).